The following is a 141-amino-acid chain: Hemoglobin subunit alpha (141 aa).

The region spanning 1–141 (VLSGTDKTNV…VGLVLTAKYR (141 aa)) is the Globin domain. Histidine 58 lines the O2 pocket. Histidine 87 serves as a coordination point for heme b.

This sequence belongs to the globin family. Heterotetramer of two alpha chains and two beta chains. In terms of tissue distribution, red blood cells.

Its function is as follows. Involved in oxygen transport from the lung to the various peripheral tissues. This chain is Hemoglobin subunit alpha (HBA), found in Psittacula krameri (Rose-ringed parakeet).